The following is a 107-amino-acid chain: Iron-binding protein IscA (107 aa).

3 residues coordinate Fe cation: Cys35, Cys99, and Cys101.

Belongs to the HesB/IscA family. In terms of assembly, homodimer; may form tetramers and higher multimers. Requires Fe cation as cofactor.

Functionally, is able to transfer iron-sulfur clusters to apo-ferredoxin. Multiple cycles of [2Fe2S] cluster formation and transfer are observed, suggesting that IscA acts catalytically. Recruits intracellular free iron so as to provide iron for the assembly of transient iron-sulfur cluster in IscU in the presence of IscS, L-cysteine and the thioredoxin reductase system TrxA/TrxB. The polypeptide is Iron-binding protein IscA (Xenorhabdus nematophila (strain ATCC 19061 / DSM 3370 / CCUG 14189 / LMG 1036 / NCIMB 9965 / AN6)).